A 657-amino-acid polypeptide reads, in one-letter code: UvrABC system protein B (657 aa).

The region spanning 25–182 (NSIKSNNRAQ…KKLIEIQYER (158 aa)) is the Helicase ATP-binding domain. 38–45 (GVTGSGKT) is an ATP binding site. A Beta-hairpin motif is present at residues 91–114 (YYDYYQPEAYVPQTDTFIEKDASI). In terms of domain architecture, Helicase C-terminal spans 429-595 (QIDDLYGEIN…TIIKDVRDII (167 aa)). The UVR domain occupies 621-656 (DKLIKDLTEEMLLAAKNLQFERAAELRDIINEIKDG).

It belongs to the UvrB family. In terms of assembly, forms a heterotetramer with UvrA during the search for lesions. Interacts with UvrC in an incision complex.

The protein localises to the cytoplasm. In terms of biological role, the UvrABC repair system catalyzes the recognition and processing of DNA lesions. A damage recognition complex composed of 2 UvrA and 2 UvrB subunits scans DNA for abnormalities. Upon binding of the UvrA(2)B(2) complex to a putative damaged site, the DNA wraps around one UvrB monomer. DNA wrap is dependent on ATP binding by UvrB and probably causes local melting of the DNA helix, facilitating insertion of UvrB beta-hairpin between the DNA strands. Then UvrB probes one DNA strand for the presence of a lesion. If a lesion is found the UvrA subunits dissociate and the UvrB-DNA preincision complex is formed. This complex is subsequently bound by UvrC and the second UvrB is released. If no lesion is found, the DNA wraps around the other UvrB subunit that will check the other stand for damage. The protein is UvrABC system protein B of Clostridium beijerinckii (strain ATCC 51743 / NCIMB 8052) (Clostridium acetobutylicum).